The chain runs to 311 residues: Methionyl-tRNA formyltransferase (311 aa).

112–115 provides a ligand contact to (6S)-5,6,7,8-tetrahydrofolate; sequence SLLP.

The protein belongs to the Fmt family.

It carries out the reaction L-methionyl-tRNA(fMet) + (6R)-10-formyltetrahydrofolate = N-formyl-L-methionyl-tRNA(fMet) + (6S)-5,6,7,8-tetrahydrofolate + H(+). Attaches a formyl group to the free amino group of methionyl-tRNA(fMet). The formyl group appears to play a dual role in the initiator identity of N-formylmethionyl-tRNA by promoting its recognition by IF2 and preventing the misappropriation of this tRNA by the elongation apparatus. This is Methionyl-tRNA formyltransferase from Bradyrhizobium sp. (strain BTAi1 / ATCC BAA-1182).